A 507-amino-acid polypeptide reads, in one-letter code: ATP synthase subunit alpha, chloroplastic (507 aa).

Gly170–Thr177 is a binding site for ATP.

This sequence belongs to the ATPase alpha/beta chains family. F-type ATPases have 2 components, CF(1) - the catalytic core - and CF(0) - the membrane proton channel. CF(1) has five subunits: alpha(3), beta(3), gamma(1), delta(1), epsilon(1). CF(0) has four main subunits: a, b, b' and c.

The protein resides in the plastid. It localises to the chloroplast thylakoid membrane. It carries out the reaction ATP + H2O + 4 H(+)(in) = ADP + phosphate + 5 H(+)(out). Produces ATP from ADP in the presence of a proton gradient across the membrane. The alpha chain is a regulatory subunit. This is ATP synthase subunit alpha, chloroplastic from Illicium oligandrum (Star anise).